Here is a 277-residue protein sequence, read N- to C-terminus: Transmembrane protein 53 (277 aa).

The chain crosses the membrane as a helical span at residues 171 to 191 (LLLLVAFALVVVLFHVLLAPI).

The protein belongs to the TMEM53 family. Widely expressed.

The protein resides in the nucleus outer membrane. Functionally, ensures normal bone formation, through the negative regulation of bone morphogenetic protein (BMP) signaling in osteoblast lineage cells by blocking cytoplasm-nucleus translocation of phosphorylated SMAD1/5/9 proteins. This chain is Transmembrane protein 53 (TMEM53), found in Homo sapiens (Human).